We begin with the raw amino-acid sequence, 305 residues long: Mycothiol acetyltransferase (305 aa).

N-acetyltransferase domains follow at residues 10–154 (DRLD…VVLE) and 156–305 (ISLR…YARA). E38 contributes to the 1D-myo-inositol 2-(L-cysteinylamino)-2-deoxy-alpha-D-glucopyranoside binding site. 82-84 (LAV) lines the acetyl-CoA pocket. 3 residues coordinate 1D-myo-inositol 2-(L-cysteinylamino)-2-deoxy-alpha-D-glucopyranoside: E183, K225, and E238. Residues 242 to 244 (VAI) and 249 to 255 (QGRGLGR) contribute to the acetyl-CoA site. Y276 provides a ligand contact to 1D-myo-inositol 2-(L-cysteinylamino)-2-deoxy-alpha-D-glucopyranoside. Acetyl-CoA is bound at residue 281–286 (NASALH).

The protein belongs to the acetyltransferase family. MshD subfamily. As to quaternary structure, monomer.

It carries out the reaction 1D-myo-inositol 2-(L-cysteinylamino)-2-deoxy-alpha-D-glucopyranoside + acetyl-CoA = mycothiol + CoA + H(+). Catalyzes the transfer of acetyl from acetyl-CoA to desacetylmycothiol (Cys-GlcN-Ins) to form mycothiol. The protein is Mycothiol acetyltransferase of Rhodococcus opacus (strain B4).